We begin with the raw amino-acid sequence, 61 residues long: Large ribosomal subunit protein uL30 (61 aa).

Belongs to the universal ribosomal protein uL30 family. Part of the 50S ribosomal subunit.

The polypeptide is Large ribosomal subunit protein uL30 (Caulobacter vibrioides (strain ATCC 19089 / CIP 103742 / CB 15) (Caulobacter crescentus)).